We begin with the raw amino-acid sequence, 603 residues long: Sulfoacetaldehyde acetyltransferase (603 aa).

This sequence belongs to the TPP enzyme family. In terms of assembly, homodimer or homotetramer. Requires Mg(2+) as cofactor. Thiamine diphosphate serves as cofactor.

It is found in the cytoplasm. It carries out the reaction acetyl phosphate + sulfite + H(+) = sulfoacetaldehyde + phosphate. It participates in organosulfur degradation; taurine degradation via aerobic pathway; acetyl phosphate and sulfite from taurine: step 2/2. In Alcaligenes xylosoxydans xylosoxydans (Achromobacter xylosoxidans), this protein is Sulfoacetaldehyde acetyltransferase (xsc).